The primary structure comprises 333 residues: Ferrochelatase (333 aa).

Residues H202 and E284 each contribute to the Fe cation site.

This sequence belongs to the ferrochelatase family.

It localises to the cytoplasm. The enzyme catalyses heme b + 2 H(+) = protoporphyrin IX + Fe(2+). The protein operates within porphyrin-containing compound metabolism; protoheme biosynthesis; protoheme from protoporphyrin-IX: step 1/1. Its function is as follows. Catalyzes the ferrous insertion into protoporphyrin IX. This Francisella tularensis subsp. mediasiatica (strain FSC147) protein is Ferrochelatase.